We begin with the raw amino-acid sequence, 537 residues long: CTP synthase (537 aa).

Residues 1-267 (MTKYIFVTGG…DQIVLDHFDV (267 aa)) are amidoligase domain. Serine 13 lines the CTP pocket. Serine 13 contacts UTP. 14–19 (SIGKGI) is a binding site for ATP. Tyrosine 54 is an L-glutamine binding site. Aspartate 71 serves as a coordination point for ATP. Mg(2+)-binding residues include aspartate 71 and glutamate 141. CTP is bound by residues 148–150 (DIE), 188–193 (KTKPTQ), and lysine 224. UTP is bound by residues 188–193 (KTKPTQ) and lysine 224. The region spanning 292-535 (KIALVGKYVA…IDAANQTGKV (244 aa)) is the Glutamine amidotransferase type-1 domain. L-glutamine is bound at residue glycine 354. Catalysis depends on cysteine 381, which acts as the Nucleophile; for glutamine hydrolysis. L-glutamine contacts are provided by residues 382–385 (LGMQ), glutamate 405, and arginine 463. Catalysis depends on residues histidine 508 and glutamate 510.

Belongs to the CTP synthase family. In terms of assembly, homotetramer.

The enzyme catalyses UTP + L-glutamine + ATP + H2O = CTP + L-glutamate + ADP + phosphate + 2 H(+). It catalyses the reaction L-glutamine + H2O = L-glutamate + NH4(+). The catalysed reaction is UTP + NH4(+) + ATP = CTP + ADP + phosphate + 2 H(+). It functions in the pathway pyrimidine metabolism; CTP biosynthesis via de novo pathway; CTP from UDP: step 2/2. Allosterically activated by GTP, when glutamine is the substrate; GTP has no effect on the reaction when ammonia is the substrate. The allosteric effector GTP functions by stabilizing the protein conformation that binds the tetrahedral intermediate(s) formed during glutamine hydrolysis. Inhibited by the product CTP, via allosteric rather than competitive inhibition. Catalyzes the ATP-dependent amination of UTP to CTP with either L-glutamine or ammonia as the source of nitrogen. Regulates intracellular CTP levels through interactions with the four ribonucleotide triphosphates. This Lactiplantibacillus plantarum (strain ATCC BAA-793 / NCIMB 8826 / WCFS1) (Lactobacillus plantarum) protein is CTP synthase.